The chain runs to 389 residues: GTPase Obg (389 aa).

Residues 1-159 form the Obg domain; it reads MKFVDEAKIL…REVLLELMLL (159 aa). In terms of domain architecture, OBG-type G spans 160-333; it reads ADVGMLGMPN…LCWDIMEFLK (174 aa). GTP is bound by residues 166 to 173, 191 to 195, 213 to 216, 283 to 286, and 314 to 316; these read GMPNAGKS, FTTLV, DIPG, NKVD, and AAI. Mg(2+) contacts are provided by Ser173 and Thr193. The interval 362–389 is disordered; sequence QLENPDLEDDDEDWDEEDDDGVEFIYQR. Acidic residues predominate over residues 364 to 383; the sequence is ENPDLEDDDEDWDEEDDDGV.

It belongs to the TRAFAC class OBG-HflX-like GTPase superfamily. OBG GTPase family. In terms of assembly, monomer. Requires Mg(2+) as cofactor.

The protein resides in the cytoplasm. An essential GTPase which binds GTP, GDP and possibly (p)ppGpp with moderate affinity, with high nucleotide exchange rates and a fairly low GTP hydrolysis rate. Plays a role in control of the cell cycle, stress response, ribosome biogenesis and in those bacteria that undergo differentiation, in morphogenesis control. In Proteus mirabilis (strain HI4320), this protein is GTPase Obg.